Consider the following 352-residue polypeptide: Cysteinyl leukotriene receptor 1 (352 aa).

The Extracellular segment spans residues 1–43 (MYLQGTKQTFLENMNGTENLTTSLINNTCHDTIDEFRNQVYST). Residues asparagine 15, asparagine 19, and asparagine 26 are each glycosylated (N-linked (GlcNAc...) asparagine). Residues 44 to 64 (MYSVISVVGFFGNSFVLYVLI) traverse the membrane as a helical segment. The Cytoplasmic segment spans residues 65 to 72 (KTYHEKSA). A helical transmembrane segment spans residues 73 to 93 (FQVYMINLAIADLLCVCTLPL). The Extracellular portion of the chain corresponds to 94-121 (RVVYYVHKGKWLFGDFLCRLTTYALYVN). A disulfide bond links cysteine 111 and cysteine 188. A helical membrane pass occupies residues 122–142 (LYCSIFFMTAMSFFRCVAIVF). The Cytoplasmic portion of the chain corresponds to 143 to 156 (PVQNINLVTQKKAR). A helical transmembrane segment spans residues 157 to 177 (FVCIGIWIFVILTSSPFLMYK). The Extracellular segment spans residues 178-208 (SYQDEKNNTKCFEPPQNNQAKKYVLILHYVS). N-linked (GlcNAc...) asparagine glycosylation occurs at asparagine 184. The chain crosses the membrane as a helical span at residues 209–229 (LFFGFIIPFVTIIVCYTMIIL). The Cytoplasmic portion of the chain corresponds to 230–245 (TLLKNTMKKNMPSRRK). The helical transmembrane segment at 246 to 266 (AIGMIIVVTAAFLVSFMPYHI) threads the bilayer. Over 267 to 291 (QRTIHLHLLHSETRPCDSVLRMQKS) the chain is Extracellular. The helical transmembrane segment at 292 to 312 (VVITLSLAASNCCFDPLLYFF) threads the bilayer. The Cytoplasmic portion of the chain corresponds to 313-352 (SGGNFRRRLSTFRKHSLSSMTYVPKKKASLPEKGEEICNE).

This sequence belongs to the G-protein coupled receptor 1 family. As to expression, widely expressed, with higher expression in the lung and skin, intermediate levels in the heart, kidney and stomach and lower levels in several other tissues. Isoform 1 is the most abundant form in all tested tissues.

It is found in the cell membrane. In terms of biological role, receptor for cysteinyl leukotrienes mediating constriction of the microvascular smooth muscle during an inflammatory response. This response is mediated via a G-protein that activates a phosphatidylinositol-calcium second messenger system. The rank order of affinities for the leukotrienes is LTD4 &gt;&gt; LTE4 = LTC4 &gt;&gt; LTB4. The sequence is that of Cysteinyl leukotriene receptor 1 (Cysltr1) from Mus musculus (Mouse).